The chain runs to 100 residues: Competence protein ComGE (100 aa).

A helical membrane pass occupies residues 15 to 35; that stretch reads VILLEAVVALAIFASIATLLL.

In terms of assembly, the transformation pili are flexible filaments, consisting mainly of the major pilin ComGC and smaller amounts of the minor pilins, including at least ComGD, ComGF and ComGG, and perhaps ComGE. Interacts with ComGD. Interacts with ComGF. Interacts with ComGG.

Its subcellular location is the cell membrane. The protein localises to the cell surface. Required for formation of the type IV-like pilus (T4P) that plays a role in transformation. Transformation pili are dynamically extended and retracted, perhaps thereby promoting DNA uptake and transformation. Involved in transformation. Required for DNA binding. The protein is Competence protein ComGE of Streptococcus pneumoniae (strain ATCC BAA-255 / R6).